The primary structure comprises 109 residues: Tyrosine-protein phosphatase 4 (109 aa).

One can recognise a Tyrosine-protein phosphatase domain in the interval 1–109; that stretch reads SKSASIVMLT…QNSGNHPIVI (109 aa). Substrate is bound at residue glutamate 78.

Belongs to the protein-tyrosine phosphatase family.

The enzyme catalyses O-phospho-L-tyrosyl-[protein] + H2O = L-tyrosyl-[protein] + phosphate. In Styela plicata (Wrinkled sea squirt), this protein is Tyrosine-protein phosphatase 4 (STY-4).